We begin with the raw amino-acid sequence, 341 residues long: GTP 3',8-cyclase (341 aa).

The 221-residue stretch at 11-231 (QKSRPLRDLR…RIINEDMPIE (221 aa)) folds into the Radical SAM core domain. Arginine 20 is a GTP binding site. [4Fe-4S] cluster is bound by residues cysteine 27 and cysteine 31. S-adenosyl-L-methionine is bound at residue tyrosine 33. Cysteine 34 is a [4Fe-4S] cluster binding site. Arginine 75 contributes to the GTP binding site. S-adenosyl-L-methionine is bound at residue glycine 79. Threonine 106 is a binding site for GTP. Residue serine 130 coordinates S-adenosyl-L-methionine. Lysine 167 lines the GTP pocket. Residue methionine 201 coordinates S-adenosyl-L-methionine. Residues cysteine 265 and cysteine 268 each coordinate [4Fe-4S] cluster. 270 to 272 (RAR) provides a ligand contact to GTP. Cysteine 282 is a binding site for [4Fe-4S] cluster.

This sequence belongs to the radical SAM superfamily. MoaA family. As to quaternary structure, monomer and homodimer. Requires [4Fe-4S] cluster as cofactor.

The catalysed reaction is GTP + AH2 + S-adenosyl-L-methionine = (8S)-3',8-cyclo-7,8-dihydroguanosine 5'-triphosphate + 5'-deoxyadenosine + L-methionine + A + H(+). It participates in cofactor biosynthesis; molybdopterin biosynthesis. In terms of biological role, catalyzes the cyclization of GTP to (8S)-3',8-cyclo-7,8-dihydroguanosine 5'-triphosphate. The sequence is that of GTP 3',8-cyclase from Bacillus licheniformis (strain ATCC 14580 / DSM 13 / JCM 2505 / CCUG 7422 / NBRC 12200 / NCIMB 9375 / NCTC 10341 / NRRL NRS-1264 / Gibson 46).